Reading from the N-terminus, the 585-residue chain is BURP domain-containing protein 17 (585 aa).

Positions 1–20 are cleaved as a signal peptide; it reads MDRIFARFFCFLLIAAVSHA. The disordered stretch occupies residues 63–82; that stretch reads GQRNYKSSVSHVAERSHRVD. In terms of domain architecture, BURP spans 363–584; it reads FFLEKNLQQG…QPDAVVWTRR (222 aa).

Expressed in leaves.

The sequence is that of BURP domain-containing protein 17 (BURP17) from Oryza sativa subsp. japonica (Rice).